The following is a 573-amino-acid chain: MADQKFAPTQDGPPSDVERIKEESNYLRGTLAESLNEPLSAGIPDDDNRLMKFHGSYLQDDRDLREERRRQKLEPAYQFMVRVRLPGGVATPKQWLAMDDLAHRYGNGTLRLTTRQTFQMHGILKWNMKKNIQGINAALMDTIAACGDVNRNVMSTPNPYQSEVHGEVYDWAKKLSEALLPKTRAYHEIWLDEEKVAGTPQQDEVEPMYGPLYLPRKFKIGVAVPPANDVDIFSQDIGFIAILEEGKLTGFNVACGGGMGMTHGDTKTYPQLGRIIGFCEPQQIMDVAEKLITIQRDYGNRSVRKYARFKYTIDRRGLDWLKNELHARLGWELGEARPFQFDHNGDRYGWTKGVKGRWHLTLFIQNGRIQDTDDYQLMTGLREIAKIHTGEFRLTGNQNVIISNITAAKKKAIQAIVETYRLTDGQHVSALRRNSMACVAFPTCGLAMAESERYLPSLIDKLEFILDEAGIREEDIVIRMAGCPNGCSRAALAEIGFIGKAPGKYNLYLGGGFAGERLSKMYKENIGEAEILETLEPILFAYAKEREEGEHFGDFVIRKGYVKAVESGTDFHQ.

The [4Fe-4S] cluster site is built by C438, C444, C483, and C487. C487 serves as a coordination point for siroheme.

This sequence belongs to the nitrite and sulfite reductase 4Fe-4S domain family. As to quaternary structure, alpha(8)-beta(8). The alpha component is a flavoprotein, the beta component is a hemoprotein. Requires siroheme as cofactor. The cofactor is [4Fe-4S] cluster.

The enzyme catalyses hydrogen sulfide + 3 NADP(+) + 3 H2O = sulfite + 3 NADPH + 4 H(+). It participates in sulfur metabolism; hydrogen sulfide biosynthesis; hydrogen sulfide from sulfite (NADPH route): step 1/1. In terms of biological role, component of the sulfite reductase complex that catalyzes the 6-electron reduction of sulfite to sulfide. This is one of several activities required for the biosynthesis of L-cysteine from sulfate. The protein is Sulfite reductase [NADPH] hemoprotein beta-component of Shouchella clausii (strain KSM-K16) (Alkalihalobacillus clausii).